Consider the following 458-residue polypeptide: Adenylosuccinate synthetase (458 aa).

Residues 17-23 (GDEGKGK) and 45-47 (GHT) contribute to the GTP site. Catalysis depends on aspartate 18, which acts as the Proton acceptor. Aspartate 18 and glycine 45 together coordinate Mg(2+). Residues 18–21 (DEGK), 43–46 (NAGH), threonine 137, arginine 151, glutamine 247, threonine 262, and arginine 330 each bind IMP. Histidine 46 (proton donor) is an active-site residue. 326 to 332 (VTTGRSR) lines the substrate pocket. GTP-binding positions include arginine 332, 358–360 (KLD), and 440–442 (STG).

This sequence belongs to the adenylosuccinate synthetase family. Homodimer. Mg(2+) serves as cofactor.

It is found in the cytoplasm. The catalysed reaction is IMP + L-aspartate + GTP = N(6)-(1,2-dicarboxyethyl)-AMP + GDP + phosphate + 2 H(+). The protein operates within purine metabolism; AMP biosynthesis via de novo pathway; AMP from IMP: step 1/2. Functionally, plays an important role in the de novo pathway of purine nucleotide biosynthesis. Catalyzes the first committed step in the biosynthesis of AMP from IMP. This Albidiferax ferrireducens (strain ATCC BAA-621 / DSM 15236 / T118) (Rhodoferax ferrireducens) protein is Adenylosuccinate synthetase.